Here is a 311-residue protein sequence, read N- to C-terminus: MRGAVWAARRRAGQQWPRSPGPGPGPPPPPPLLLLLLLLLGGASAQYSSDLCSWKGSGLTREARSKEVEQVYLRCSAGSVEWMYPTGALIVNLRPNTFSPAQNLTVCIKPFRDSSGANIYLEKTGELRLLVRDIRGEPGQVQCFSLEQGGLFVEATPQQDISRRTTGFQYELMSGQRGLDLHVLSAPCRPCSDTEVLLAICTSDFVVRGFIEDVTHVPEQQVSVIYLRVNRLHRQKSRVFQPAPEDSGHWLGHVTTLLQCGVRPGHGEFLFTGHVHFGEAQLGCAPRFSDFQRMYRKAEEMGINPCEINME.

Residues 1–45 form the signal peptide; it reads MRGAVWAARRRAGQQWPRSPGPGPGPPPPPPLLLLLLLLLGGASA. A disulfide bridge links C52 with C75. N103 carries an N-linked (GlcNAc...) asparagine glycan. 4 disulfide bridges follow: C107–C143, C188–C260, C191–C284, and C201–C306.

It belongs to the meteorin family. N-glycosylated. In terms of tissue distribution, highly expressed in subcutaneous adipose tissue.

Its subcellular location is the secreted. Functionally, hormone induced following exercise or cold exposure that promotes energy expenditure. Induced either in the skeletal muscle after exercise or in adipose tissue following cold exposure and is present in the circulation. Able to stimulate energy expenditure associated with the browning of the white fat depots and improves glucose tolerance. Does not promote an increase in a thermogenic gene program via direct action on adipocytes, but acts by stimulating several immune cell subtypes to enter the adipose tissue and activate their prothermogenic actions. Stimulates an eosinophil-dependent increase in IL4 expression and promotes alternative activation of adipose tissue macrophages, which are required for the increased expression of the thermogenic and anti-inflammatory gene programs in fat. Required for some cold-induced thermogenic responses, suggesting a role in metabolic adaptations to cold temperatures. The polypeptide is Meteorin-like protein (Metrnl) (Mus musculus (Mouse)).